Here is a 907-residue protein sequence, read N- to C-terminus: Phosphoenolpyruvate carboxylase (907 aa).

Residues His138 and Lys570 contribute to the active site.

It belongs to the PEPCase type 1 family. The cofactor is Mg(2+).

It catalyses the reaction oxaloacetate + phosphate = phosphoenolpyruvate + hydrogencarbonate. In terms of biological role, forms oxaloacetate, a four-carbon dicarboxylic acid source for the tricarboxylic acid cycle. This is Phosphoenolpyruvate carboxylase from Streptococcus mutans serotype c (strain ATCC 700610 / UA159).